Consider the following 235-residue polypeptide: NADH-quinone oxidoreductase subunit C (235 aa).

It belongs to the complex I 30 kDa subunit family. As to quaternary structure, NDH-1 is composed of 14 different subunits. Subunits NuoB, C, D, E, F, and G constitute the peripheral sector of the complex.

The protein resides in the cell membrane. It carries out the reaction a quinone + NADH + 5 H(+)(in) = a quinol + NAD(+) + 4 H(+)(out). Functionally, NDH-1 shuttles electrons from NADH, via FMN and iron-sulfur (Fe-S) centers, to quinones in the respiratory chain. The immediate electron acceptor for the enzyme in this species is believed to be a menaquinone. Couples the redox reaction to proton translocation (for every two electrons transferred, four hydrogen ions are translocated across the cytoplasmic membrane), and thus conserves the redox energy in a proton gradient. The protein is NADH-quinone oxidoreductase subunit C of Mycolicibacterium paratuberculosis (strain ATCC BAA-968 / K-10) (Mycobacterium paratuberculosis).